A 192-amino-acid polypeptide reads, in one-letter code: MKLLEERIRKDGEVLDGDVLKINSFLNHQVDPELMMQVGEEFKRLFENEKITKVLTCEASGIAPGIMAAYQLGVPMVFARKKKPSTLNDAVYWADVFSYTKKVNNKICVEKKFLSSDDHLLIIDDFLAHGEAVKGMLNIAKQANAAVAGVGVVVAKEFQGGSDWVKEHGYRLEALARISNFENNQVHFVGEK.

Xanthine is bound by residues Leu-20 and Asn-27. 128-132 (AHGEA) lines the 5-phospho-alpha-D-ribose 1-diphosphate pocket. Lys-156 contacts xanthine.

This sequence belongs to the purine/pyrimidine phosphoribosyltransferase family. Xpt subfamily. As to quaternary structure, homodimer.

The protein resides in the cytoplasm. It catalyses the reaction XMP + diphosphate = xanthine + 5-phospho-alpha-D-ribose 1-diphosphate. It functions in the pathway purine metabolism; XMP biosynthesis via salvage pathway; XMP from xanthine: step 1/1. In terms of biological role, converts the preformed base xanthine, a product of nucleic acid breakdown, to xanthosine 5'-monophosphate (XMP), so it can be reused for RNA or DNA synthesis. This chain is Xanthine phosphoribosyltransferase, found in Lactobacillus gasseri (strain ATCC 33323 / DSM 20243 / BCRC 14619 / CIP 102991 / JCM 1131 / KCTC 3163 / NCIMB 11718 / NCTC 13722 / AM63).